The following is a 943-amino-acid chain: MTDYKATLNLPDTAFPMKAGLPQREPQTLQRWDSIGLYQKLREIGKDRPKFVLHDGPPYANGTIHIGHAVNKILKDMILRSKTLAGFDAPYVPGWDCHGLPIEHKVEVTHGKNLSADRTRELCRAYAAEQIEGQKSEFIRLGVLGDWSNPYLTMNFANEAGEIRALAEMVKGGFVFKGLKPVNWCFDCGSALAEAEVEYQDKKSSTIDVAFPIADEAKLAAAFGLPSLGKPASIVIWTTTPWTIPANQALNVHPEFEYSLVDVGDKLLVLASELVESCLARYKLEGTVVATTTGQALELINFRHPFYDRLSPIYLAEYVELSAGTGIVHCSPAYGVDDFTICKQYGLSNDDIISPVQSNGVYVESLEFFGGQFIFKANQNIIDKLVEVGSLMDTETISHSYMHCWRHKSPLIYRATAQWFVGMDKQPESGETLRKRAVKAIEDTEFVPAWGQARLHSMIANRPDWCISRQRNWGVPIPFFLHKESGDLHPRTVELMEEVALRVEKEGIEAWFKLDASELLGDEAAKYDKISDTLDVWFDSGTTHWHVLRGSHPMGHETGPRADLYLEGSDQHRGWFHSSLLTGCMLDDHAPYRELLTHGFVVDENGRKMSKSLNNVVAPQKVNDSLGADIMRLWVSATDYSGEMAVSDQILQRSADAYRRIRNTARFLLSNLSGFNPATDILPAEEMLALDRWAVDRTLLLQRELQEHYGEYRFWNVYSKIHNFCVQELGGFYLDIIKDRQYTTAADSTARRSCQTALFHISEALVRWIAPILAFTADELWQFLPGERNESVMLNTWYEGLTELPADFEMDRAYWERIMAVKTSVNKEMENLRAAKAIGGNLQAEVTLYAEDSLVADLSKLSNELRFVLITSTASVAPFVSAPADAVVTEVAGLKLKVVKSGHAKCARCWHHREDVGVNPEHPEICGRCIDNISGAGEVRHYA.

Positions 58-68 (PYANGTIHIGH) match the 'HIGH' region motif. L-isoleucyl-5'-AMP is bound at residue Glu-567. The 'KMSKS' region motif lies at 608–612 (KMSKS). Lys-611 provides a ligand contact to ATP. Residues Cys-906, Cys-909, Cys-926, and Cys-929 each coordinate Zn(2+).

It belongs to the class-I aminoacyl-tRNA synthetase family. IleS type 1 subfamily. As to quaternary structure, monomer. Requires Zn(2+) as cofactor.

It is found in the cytoplasm. The catalysed reaction is tRNA(Ile) + L-isoleucine + ATP = L-isoleucyl-tRNA(Ile) + AMP + diphosphate. Functionally, catalyzes the attachment of isoleucine to tRNA(Ile). As IleRS can inadvertently accommodate and process structurally similar amino acids such as valine, to avoid such errors it has two additional distinct tRNA(Ile)-dependent editing activities. One activity is designated as 'pretransfer' editing and involves the hydrolysis of activated Val-AMP. The other activity is designated 'posttransfer' editing and involves deacylation of mischarged Val-tRNA(Ile). This chain is Isoleucine--tRNA ligase, found in Pseudomonas syringae pv. tomato (strain ATCC BAA-871 / DC3000).